The primary structure comprises 1377 residues: DNA-directed RNA polymerase subunit beta' (1377 aa).

Zn(2+) is bound by residues cysteine 60, cysteine 62, cysteine 75, and cysteine 78. Residues aspartate 449, aspartate 451, and aspartate 453 each coordinate Mg(2+). Zn(2+)-binding residues include cysteine 777, cysteine 851, cysteine 858, and cysteine 861.

This sequence belongs to the RNA polymerase beta' chain family. The RNAP catalytic core consists of 2 alpha, 1 beta, 1 beta' and 1 omega subunit. When a sigma factor is associated with the core the holoenzyme is formed, which can initiate transcription. Requires Mg(2+) as cofactor. Zn(2+) is required as a cofactor.

The catalysed reaction is RNA(n) + a ribonucleoside 5'-triphosphate = RNA(n+1) + diphosphate. In terms of biological role, DNA-dependent RNA polymerase catalyzes the transcription of DNA into RNA using the four ribonucleoside triphosphates as substrates. This Borreliella afzelii (strain PKo) (Borrelia afzelii) protein is DNA-directed RNA polymerase subunit beta'.